A 415-amino-acid polypeptide reads, in one-letter code: Histidine--tRNA ligase (415 aa).

It belongs to the class-II aminoacyl-tRNA synthetase family. In terms of assembly, homodimer.

It localises to the cytoplasm. The catalysed reaction is tRNA(His) + L-histidine + ATP = L-histidyl-tRNA(His) + AMP + diphosphate + H(+). The polypeptide is Histidine--tRNA ligase (Clostridium perfringens (strain SM101 / Type A)).